Consider the following 956-residue polypeptide: DNA ligase 4 (956 aa).

Glu307, Lys309, Ile310, Arg314, Glu371, Phe409, Glu476, Lys481, Lys498, and Lys500 together coordinate ATP. Lys309 functions as the N6-AMP-lysine intermediate in the catalytic mechanism. Glu371 contacts Mg(2+). Glu476 provides a ligand contact to Mg(2+). Residues 666–700 are disordered; that stretch reads LEDRKRRNAGPGRGAKRLKLANVSSDEDELGTDER. BRCT domains follow at residues 700–793 and 857–956; these read RPTS…PRNL and PKGM…DYPL.

This sequence belongs to the ATP-dependent DNA ligase family. The cofactor is Mg(2+).

It localises to the nucleus. It carries out the reaction ATP + (deoxyribonucleotide)n-3'-hydroxyl + 5'-phospho-(deoxyribonucleotide)m = (deoxyribonucleotide)n+m + AMP + diphosphate.. Functionally, DNA ligase involved in DNA non-homologous end joining (NHEJ); required for double-strand break (DSB) repair. The protein is DNA ligase 4 (LIG4) of Yarrowia lipolytica (strain CLIB 122 / E 150) (Yeast).